A 239-amino-acid chain; its full sequence is Ribonuclease 3 (239 aa).

Residues 11–133 (HAAIQKKLGY…MFAAVSFDAD (123 aa)) form the RNase III domain. E46 is a Mg(2+) binding site. D50 is an active-site residue. Mg(2+) is bound by residues D119 and E122. The DRBM domain maps to 160–230 (DGKTALQEAL…AKEALKWLEE (71 aa)).

The protein belongs to the ribonuclease III family. Homodimer. Mg(2+) is required as a cofactor.

The protein localises to the cytoplasm. The catalysed reaction is Endonucleolytic cleavage to 5'-phosphomonoester.. In terms of biological role, digests double-stranded RNA. Involved in the processing of primary rRNA transcript to yield the immediate precursors to the large and small rRNAs (23S and 16S). Also processes some mRNAs, and tRNAs when they are encoded in the rRNA operon. CRISPR (clustered regularly interspaced short palindromic repeat) is an adaptive immune system that provides protection against mobile genetic elements (viruses, transposable elements and conjugative plasmids). CRISPR clusters contain spacers, sequences complementary to antecedent mobile elements, and target invading nucleic acids. CRISPR clusters are transcribed and processed into CRISPR RNA (crRNA). In this organism endogenous ribonuclease 3 and Cas9 are required for correct coprocessing of pre-crRNA and the trans-encoded small RNA (tracrRNA). Cas9, crRNA and tracRNA are required for cleavage of invading DNA. Involved in 3'-end processing but not 5'-end processing of crRNA and tracrRNA. This chain is Ribonuclease 3, found in Neisseria meningitidis serogroup C (strain 8013).